A 171-amino-acid polypeptide reads, in one-letter code: Sec-independent protein translocase protein TatB (171 aa).

The helical transmembrane segment at 1–21 (MFDIGFSELLLVFIIGLVVLG) threads the bilayer. The tract at residues 89–171 (AESMKRSYVA…APSPSSSDKP (83 aa)) is disordered. Residues 100-123 (DPEKASDEAHTIHNPVVKDNETAH) are compositionally biased toward basic and acidic residues. Residues 130 to 139 (AAQTQASSPE) show a composition bias toward polar residues.

It belongs to the TatB family. In terms of assembly, the Tat system comprises two distinct complexes: a TatABC complex, containing multiple copies of TatA, TatB and TatC subunits, and a separate TatA complex, containing only TatA subunits. Substrates initially bind to the TatABC complex, which probably triggers association of the separate TatA complex to form the active translocon.

It localises to the cell inner membrane. Functionally, part of the twin-arginine translocation (Tat) system that transports large folded proteins containing a characteristic twin-arginine motif in their signal peptide across membranes. Together with TatC, TatB is part of a receptor directly interacting with Tat signal peptides. TatB may form an oligomeric binding site that transiently accommodates folded Tat precursor proteins before their translocation. This Escherichia coli O1:K1 / APEC protein is Sec-independent protein translocase protein TatB.